Here is a 430-residue protein sequence, read N- to C-terminus: Carbamoyl phosphate synthase arginine-specific small chain (430 aa).

The transit peptide at 1-9 (MLSATKRYL) directs the protein to the mitochondrion. Residues 219 to 407 (HIAVLDCGAK…FDNINVYKKS (189 aa)) form the Glutamine amidotransferase type-1 domain. Catalysis depends on C296, which acts as the Nucleophile. Residues H380 and E382 contribute to the active site.

The protein belongs to the CarA family. In terms of assembly, heterodimer composed of 2 chains; the small (or glutamine) chain promotes the hydrolysis of glutamine to ammonia, which is used by the large (or ammonia) chain to synthesize carbamoyl phosphate.

It localises to the mitochondrion matrix. The catalysed reaction is hydrogencarbonate + L-glutamine + 2 ATP + H2O = carbamoyl phosphate + L-glutamate + 2 ADP + phosphate + 2 H(+). The enzyme catalyses L-glutamine + H2O = L-glutamate + NH4(+). The protein operates within amino-acid biosynthesis; L-arginine biosynthesis; carbamoyl phosphate from bicarbonate: step 1/1. Small subunit of the arginine-specific carbamoyl phosphate synthase (CPSase). CPSase catalyzes the formation of carbamoyl phosphate from the ammonia moiety of glutamine, carbonate, and phosphate donated by ATP, the first step of the arginine biosynthetic pathway. The small subunit (glutamine amidotransferase) binds and cleaves glutamine to supply the large subunit with the substrate ammonia. This is Carbamoyl phosphate synthase arginine-specific small chain (CPA1) from Candida albicans (strain SC5314 / ATCC MYA-2876) (Yeast).